Consider the following 272-residue polypeptide: Shikimate dehydrogenase (NADP(+)) (272 aa).

Shikimate is bound by residues 14-16 and T61; that span reads SKS. K65 (proton acceptor) is an active-site residue. E77 contributes to the NADP(+) binding site. 2 residues coordinate shikimate: N86 and D102. NADP(+) is bound by residues 126-130, 149-154, and M213; these read GAGGA and NRTVSR. Y215 is a shikimate binding site. G237 provides a ligand contact to NADP(+).

The protein belongs to the shikimate dehydrogenase family. As to quaternary structure, homodimer.

It carries out the reaction shikimate + NADP(+) = 3-dehydroshikimate + NADPH + H(+). It participates in metabolic intermediate biosynthesis; chorismate biosynthesis; chorismate from D-erythrose 4-phosphate and phosphoenolpyruvate: step 4/7. In terms of biological role, involved in the biosynthesis of the chorismate, which leads to the biosynthesis of aromatic amino acids. Catalyzes the reversible NADPH linked reduction of 3-dehydroshikimate (DHSA) to yield shikimate (SA). The protein is Shikimate dehydrogenase (NADP(+)) of Escherichia coli (strain K12 / MC4100 / BW2952).